The chain runs to 770 residues: MKMTVDFEECLKDSPRFRAALEEVEGDVAELELKLDKLVKLCIAMIDTGKAFCVANKQFMNGIRDLAQYSSNDAVVETSLTKFSDSLQEMINFHTILFDQTQRSIKAQLQNFVKEDLRKFKDAKKQFEKVSEEKENALVKNAQVQRNKQHEVEEAANILTATRKCFRHIALDYVLQINVLQSKRRSEILKSMLSFMYAHLAFFHQGYDLFSELGPYMKDLGAQLDRLVVDAAKEKREMEQKHSTIQQKDFSSDDSKLEYNVDAANGIVMEGYLFKRASNAFKTWNRRWFSIQNNQLVYQKKFKDSPTVVVEDLRLCTVKHCEDIERRFCFEVVSPTKSCMLQADSEKLRQAWIKAVQTSIATAYREKGDESEKLDKKSSPSTGSLDSGNESKEKLLKGESALQRVQCIPGNTSCCDCGLADPRWASINLGITLCIECSGIHRSLGVHFSKVRSLTLDTWEPELLKLMCELGNDVINRVYEAKLEKMGVKKPQPGQRQEKEAYIRAKYVERKFVDKYSALLSPSEQEKRIISKSCEDQRLSHARASVHTPVKSNDSGIQQCSEDGRESLPSTVSANSLYEPEGERQESSVFLDSKHLNPGLQLYRASYEKNLPKMAEALAHGADVNWANSDENQATPLIQAVLGGSLVTCEFLLQNGANVNQRDVQGRGPLHHATVLGHTGQVCLFLKRGANQHATDEEGKDPLSIAVEAANADIVTLLRLARMNEEMRESEGLYGQPGDETYQDIFRDFSQMASNNPEKLNRFQQDSQKF.

A BAR domain is found at 1-226 (MKMTVDFEEC…MKDLGAQLDR (226 aa)). Positions 266–361 (GIVMEGYLFK…WIKAVQTSIA (96 aa)) constitute a PH domain. Residues 371–391 (SEKLDKKSSPSTGSLDSGNES) form a disordered region. The segment covering 379 to 388 (SPSTGSLDSG) has biased composition (polar residues). Residues Ser384 and Ser387 each carry the phosphoserine modification. The region spanning 399-520 (ESALQRVQCI…KFVDKYSALL (122 aa)) is the Arf-GAP domain. Residues 414–437 (CCDCGLADPRWASINLGITLCIEC) form a C4-type zinc finger. Phosphoserine is present on Ser521. The segment at 542–572 (ARASVHTPVKSNDSGIQQCSEDGRESLPSTV) is disordered. The segment covering 550 to 561 (VKSNDSGIQQCS) has biased composition (polar residues). Phosphoserine is present on residues Ser573 and Ser576. ANK repeat units lie at residues 632–661 (NQAT…NVNQ), 665–694 (QGRG…NQHA), and 698–727 (EGKD…NEEM). Tyr734 bears the Phosphotyrosine mark. Position 767 is a phosphoserine (Ser767).

Interacts with RAB35 (GTP-bound form); the interaction is direct and probably recruits ACAP2 to membranes. Interacts with MICALL1; the interaction is indirect through RAB35.

It localises to the endosome membrane. Its subcellular location is the cell membrane. Its activity is regulated as follows. GAP activity stimulated by phosphatidylinositol 4,5-bisphosphate (PIP2) and phosphatidic acid. Functionally, GTPase-activating protein (GAP) for ADP ribosylation factor 6 (ARF6). Doesn't show GAP activity for RAB35. The sequence is that of Arf-GAP with coiled-coil, ANK repeat and PH domain-containing protein 2 (Acap2) from Mus musculus (Mouse).